Reading from the N-terminus, the 682-residue chain is Potassium-transporting ATPase ATP-binding subunit (682 aa).

The next 4 membrane-spanning stretches (helical) occupy residues 35–55 (VMFV…AMAA), 62–82 (TGFT…ANFA), 219–239 (IALT…TVTL), and 254–274 (VLVA…LSAI). D307 serves as the catalytic 4-aspartylphosphate intermediate. ATP contacts are provided by residues D344, E348, 377–384 (FSAQTRMS), and K395. Residues D518 and D522 each coordinate Mg(2+). A run of 3 helical transmembrane segments spans residues 577 to 597 (TFSI…AFAA), 616 to 636 (AILS…PLAL), and 656 to 676 (IYGV…DMLL).

This sequence belongs to the cation transport ATPase (P-type) (TC 3.A.3) family. Type IA subfamily. The system is composed of three essential subunits: KdpA, KdpB and KdpC.

It is found in the cell inner membrane. The catalysed reaction is K(+)(out) + ATP + H2O = K(+)(in) + ADP + phosphate + H(+). Its function is as follows. Part of the high-affinity ATP-driven potassium transport (or Kdp) system, which catalyzes the hydrolysis of ATP coupled with the electrogenic transport of potassium into the cytoplasm. This subunit is responsible for energy coupling to the transport system and for the release of the potassium ions to the cytoplasm. The sequence is that of Potassium-transporting ATPase ATP-binding subunit from Erwinia tasmaniensis (strain DSM 17950 / CFBP 7177 / CIP 109463 / NCPPB 4357 / Et1/99).